We begin with the raw amino-acid sequence, 652 residues long: DNA ligase (652 aa).

NAD(+) is bound by residues 29-33 (DSEYD), 78-79 (SL), and glutamate 107. Lysine 109 (N6-AMP-lysine intermediate) is an active-site residue. The NAD(+) site is built by arginine 130, glutamate 164, lysine 278, and lysine 302. Zn(2+) contacts are provided by cysteine 395, cysteine 398, cysteine 413, and cysteine 418. The BRCT domain occupies 577–652 (VADAALSGLT…VRDEAWLESL (76 aa)).

This sequence belongs to the NAD-dependent DNA ligase family. LigA subfamily. Requires Mg(2+) as cofactor. Mn(2+) serves as cofactor.

It catalyses the reaction NAD(+) + (deoxyribonucleotide)n-3'-hydroxyl + 5'-phospho-(deoxyribonucleotide)m = (deoxyribonucleotide)n+m + AMP + beta-nicotinamide D-nucleotide.. In terms of biological role, DNA ligase that catalyzes the formation of phosphodiester linkages between 5'-phosphoryl and 3'-hydroxyl groups in double-stranded DNA using NAD as a coenzyme and as the energy source for the reaction. It is essential for DNA replication and repair of damaged DNA. The chain is DNA ligase from Streptococcus pneumoniae (strain Hungary19A-6).